The primary structure comprises 314 residues: Ribose-phosphate pyrophosphokinase (314 aa).

ATP contacts are provided by residues 37 to 39 (DGE) and 96 to 97 (RQ). Residues His-131 and Asp-170 each contribute to the Mg(2+) site. Lys-194 is a catalytic residue. D-ribose 5-phosphate is bound by residues Arg-196, Asp-220, and 224–228 (DTGGT).

Belongs to the ribose-phosphate pyrophosphokinase family. Class I subfamily. Homohexamer. Mg(2+) is required as a cofactor.

The protein localises to the cytoplasm. The enzyme catalyses D-ribose 5-phosphate + ATP = 5-phospho-alpha-D-ribose 1-diphosphate + AMP + H(+). Its pathway is metabolic intermediate biosynthesis; 5-phospho-alpha-D-ribose 1-diphosphate biosynthesis; 5-phospho-alpha-D-ribose 1-diphosphate from D-ribose 5-phosphate (route I): step 1/1. In terms of biological role, involved in the biosynthesis of the central metabolite phospho-alpha-D-ribosyl-1-pyrophosphate (PRPP) via the transfer of pyrophosphoryl group from ATP to 1-hydroxyl of ribose-5-phosphate (Rib-5-P). The sequence is that of Ribose-phosphate pyrophosphokinase from Vibrio parahaemolyticus serotype O3:K6 (strain RIMD 2210633).